The primary structure comprises 432 residues: FLYWCH-type zinc finger-containing protein peb-1 (432 aa).

The disordered stretch occupies residues 1–33; sequence MLGLEKPLSSDISSSSTDTSAISPISVSSMPLS. Residues 9–26 show a composition bias toward low complexity; that stretch reads SSDISSSSTDTSAISPIS. The required for DNA-binding DNA-binding region spans 30–188; it reads MPLSPDKEKK…RNKEGKPRKP (159 aa). The FLYWCH-type zinc finger occupies 53 to 120; sequence IVTSFKGYQK…NACTKNTHNH (68 aa). Positions 174-195 are disordered; sequence SLVSARNKEGKPRKPKSKTSTN.

Its subcellular location is the nucleus. Its function is as follows. Putative transcription factor. Binds to specific sequence motif 5'-[TC][AGT]TGCC[GA][AT]-3' in regulatory elements of target genes such as myosin myo-2. May modulate gene expression, perhaps acting in opposition to transcription factor pha-4. Involved in morphogenesis, perhaps especially in formation of the pharynx. Plays roles in molting, feeding and morphology. The polypeptide is FLYWCH-type zinc finger-containing protein peb-1 (Caenorhabditis briggsae).